We begin with the raw amino-acid sequence, 486 residues long: Cardiolipin synthase A (486 aa).

A run of 2 helical transmembrane segments spans residues 3 to 23 (TFYTVISWLMVFGYWLLIAGV) and 38 to 58 (MAWLLVIYILPLFGIVAYLSF). 2 PLD phosphodiesterase domains span residues 219 to 246 (MDLRQHRKVVLIDNYIAYTGSMNMVDPR) and 399 to 426 (EDGLLHTKSVLVDGQLSLVGTVNLDMRS). Active-site residues include His-224, Lys-226, Asp-231, His-404, Lys-406, and Asp-411.

This sequence belongs to the phospholipase D family. Cardiolipin synthase subfamily. ClsA sub-subfamily.

The protein localises to the cell inner membrane. The enzyme catalyses 2 a 1,2-diacyl-sn-glycero-3-phospho-(1'-sn-glycerol) = a cardiolipin + glycerol. Functionally, catalyzes the reversible phosphatidyl group transfer from one phosphatidylglycerol molecule to another to form cardiolipin (CL) (diphosphatidylglycerol) and glycerol. The chain is Cardiolipin synthase A from Serratia proteamaculans (strain 568).